The chain runs to 102 residues: Small ribosomal subunit protein uS10 (102 aa).

It belongs to the universal ribosomal protein uS10 family. Part of the 30S ribosomal subunit.

Its function is as follows. Involved in the binding of tRNA to the ribosomes. This chain is Small ribosomal subunit protein uS10, found in Streptococcus mutans serotype c (strain ATCC 700610 / UA159).